Reading from the N-terminus, the 169-residue chain is Ribosome maturation factor RimM (169 aa).

One can recognise a PRC barrel domain in the interval 97–169 (EDEVYFKDLI…KIVVDWEYDY (73 aa)).

It belongs to the RimM family. Binds ribosomal protein uS19.

The protein resides in the cytoplasm. Functionally, an accessory protein needed during the final step in the assembly of 30S ribosomal subunit, possibly for assembly of the head region. Essential for efficient processing of 16S rRNA. May be needed both before and after RbfA during the maturation of 16S rRNA. It has affinity for free ribosomal 30S subunits but not for 70S ribosomes. This is Ribosome maturation factor RimM from Francisella tularensis subsp. tularensis (strain WY96-3418).